Here is a 152-residue protein sequence, read N- to C-terminus: UPF0178 protein YaiI (152 aa).

Belongs to the UPF0178 family.

This is UPF0178 protein YaiI from Escherichia coli O6:K15:H31 (strain 536 / UPEC).